The following is a 261-amino-acid chain: Proliferating cell nuclear antigen (261 aa).

Residues K14, K77, and K80 each carry the N6-acetyllysine modification. A DNA-binding region spans residues 61-80; sequence RCDRNLAMGVNLTSMSKILK. A disulfide bond links C135 and C162. K164 is covalently cross-linked (Glycyl lysine isopeptide (Lys-Gly) (interchain with G-Cter in SUMO2); alternate). K164 participates in a covalent cross-link: Glycyl lysine isopeptide (Lys-Gly) (interchain with G-Cter in ubiquitin); alternate. A Phosphotyrosine; by EGFR modification is found at Y211. K248 is modified (N6-acetyllysine). Residue K254 forms a Glycyl lysine isopeptide (Lys-Gly) (interchain with G-Cter in SUMO2) linkage.

This sequence belongs to the PCNA family. Homotrimer. Interacts with p300/EP300; the interaction occurs on chromatin in UV-irradiated damaged cells. Interacts with CREBBP (via transactivation domain and C-terminus); the interaction occurs on chromatin in UV-irradiated damaged cells. Directly interacts with POLD1, POLD3 and POLD4 subunits of the DNA polymerase delta complex, POLD3 being the major interacting partner; the interaction with POLD3 is inhibited by CDKN1A/p21(CIP1). Forms a complex with activator 1 heteropentamer in the presence of ATP. Interacts with EXO1, POLH, POLK, DNMT1, ERCC5, FEN1, CDC6 and POLDIP2. Interacts with POLB. Interacts with APEX2; this interaction is triggered by reactive oxygen species and increased by misincorporation of uracil in nuclear DNA. Forms a ternary complex with DNTTIP2 and core histone. Interacts with KCTD10 and PPP1R15A. Interacts with SMARCA5/SNF2H. Interacts with BAZ1B/WSTF; the interaction is direct and is required for BAZ1B/WSTF binding to replication foci during S phase. Interacts with HLTF and SHPRH. Interacts with NUDT15; this interaction is disrupted in response to UV irradiation and acetylation. Interacts with CDKN1A/p21(CIP1) and CDT1; interacts via their PIP-box which also recruits the DCX(DTL) complex. The interaction with CDKN1A inhibits POLD3 binding. Interacts with DDX11. Interacts with EGFR; positively regulates PCNA. Interacts with PARPBP. Interacts (when ubiquitinated) with SPRTN; leading to enhance RAD18-mediated PCNA ubiquitination. Interacts (when polyubiquitinated) with ZRANB3. Interacts with SMARCAD1. Interacts with CDKN1C. Interacts with PCLAF (via PIP-box). Interacts with RTEL1 (via PIP-box); the interaction is direct and essential for the suppression of telomere fragility. Interacts with FAM111A (via PIP-box); the interaction is direct and required for PCNA loading on chromatin binding. Interacts with LIG1. Interacts with SETMAR. Interacts with ANKRD17. Interacts with FBXO18/FBH1 (via PIP-box); the interaction recruits the DCX(DTL) complex and promotes ubiquitination and degradation of FBXO18/FBH1. Interacts with POLN. Interacts with SDE2 (via PIP-box); the interaction is direct and prevents ultraviolet light induced monoubiquitination. Component of the replisome complex composed of at least DONSON, MCM2, MCM7, PCNA and TICRR; interaction at least with PCNA occurs during DNA replication. Interacts with MAPK15; the interaction is chromatin binding dependent and prevents MDM2-mediated PCNA destruction by inhibiting the association of PCNA with MDM2. Interacts with PARP10 (via PIP-box). Interacts with DDI2. Interacts with HMCES (via PIP-box). Interacts with TRAIP (via PIP-box). Interacts with UHRF2. Interacts with ALKBH2; this interaction is enhanced during the S-phase of the cell cycle. Interacts with ATAD5; the interaction promotes USP1-mediated PCNA deubiquitination. Interacts (when phosphorylated) with GRB2. Interacts with nuclear UNG; this interaction mediates UNG recruitment to S-phase replication foci. Interacts with ERCC6L2 (via an atypical PIP-box); this interaction facilitates cenrtomeric localization of ERCC6L2. In terms of processing, phosphorylated. Phosphorylation at Tyr-211 by EGFR stabilizes chromatin-associated PCNA. Post-translationally, acetylated by CREBBP and p300/EP300; preferentially acetylated by CREBBP on Lys-80, Lys-13 and Lys-14 and on Lys-77 by p300/EP300 upon loading on chromatin in response to UV irradiation. Lysine acetylation disrupts association with chromatin, hence promoting PCNA ubiquitination and proteasomal degradation in response to UV damage in a CREBBP- and EP300-dependent manner. Acetylation disrupts interaction with NUDT15 and promotes degradation. Ubiquitinated. Following DNA damage, can be either monoubiquitinated to stimulate direct bypass of DNA lesions by specialized DNA polymerases or polyubiquitinated to promote recombination-dependent DNA synthesis across DNA lesions by template switching mechanisms. Following induction of replication stress, monoubiquitinated by the UBE2B-RAD18 complex on Lys-164, leading to recruit translesion (TLS) polymerases, which are able to synthesize across DNA lesions in a potentially error-prone manner. An error-free pathway also exists and requires non-canonical polyubiquitination on Lys-164 through 'Lys-63' linkage of ubiquitin moieties by the E2 complex UBE2N-UBE2V2 and the E3 ligases, HLTF, RNF8 and SHPRH. This error-free pathway, also known as template switching, employs recombination mechanisms to synthesize across the lesion, using as a template the undamaged, newly synthesized strand of the sister chromatid. Monoubiquitination at Lys-164 also takes place in undamaged proliferating cells, and is mediated by the DCX(DTL) complex, leading to enhance PCNA-dependent translesion DNA synthesis. Sumoylated during S phase. In terms of processing, methylated on glutamate residues by ARMT1.

Its subcellular location is the nucleus. Auxiliary protein of DNA polymerase delta and epsilon, is involved in the control of eukaryotic DNA replication by increasing the polymerase's processibility during elongation of the leading strand. Induces a robust stimulatory effect on the 3'-5' exonuclease and 3'-phosphodiesterase, but not apurinic-apyrimidinic (AP) endonuclease, APEX2 activities. Has to be loaded onto DNA in order to be able to stimulate APEX2. Plays a key role in DNA damage response (DDR) by being conveniently positioned at the replication fork to coordinate DNA replication with DNA repair and DNA damage tolerance pathways. Acts as a loading platform to recruit DDR proteins that allow completion of DNA replication after DNA damage and promote postreplication repair: Monoubiquitinated PCNA leads to recruitment of translesion (TLS) polymerases, while 'Lys-63'-linked polyubiquitination of PCNA is involved in error-free pathway and employs recombination mechanisms to synthesize across the lesion. The chain is Proliferating cell nuclear antigen (PCNA) from Bos taurus (Bovine).